The following is a 777-amino-acid chain: MPDNRQPRNRQPRIRSGNEPRSAPAMEPDGRGAWAHSRAALDRLEKLLRCSRCTNILREPVCLGGCEHIFCSNCVSDCIGTGCPVCYTPAWIQDLKINRQLDSMIQLCSKLRNLLHDNELSDLKEDKPRKSLFNDAGNKKNSIKMWFSPRSKKVRYVVSKASVQTQPAIKKDASAQQDSYEFVSPSPPADVSERAKKASARSGKKQKKKTLAEINQKWNLEAEKEDGEFDSKEESKQKLVSFCSQPSVISSPQINGEIDLLASGSLTESECFGSLTEVSLPLAEQIESPDTKSRNEVVTPEKVCKNYLTSKKSLPLENNGKRGHHNRLSSPISKRCRTSILSTSGDFVKQTVPSENIPLPECSSPPSCKRKVGGTSGRKNSNMSDEFISLSPGTPPSTLSSSSYRRVMSSPSAMKLLPNMAVKRNHRGETLLHIASIKGDIPSVEYLLQNGSDPNVKDHAGWTPLHEACNHGHLKVVELLLQHKALVNTTGYQNDSPLHDAAKNGHVDIVKLLLSYGASRNAVNIFGLRPVDYTDDESMKSLLLLPEKNESSSASHCSVMNTGQRRDGPLVLIGSGLSSEQQKMLSELAVILKAKKYTEFDSTVTHVVVPGDAVQSTLKCMLGILNGCWILKFEWVKACLRRKVCEQEEKYEIPEGPRRSRLNREQLLPKLFDGCYFYLWGTFKHHPKDNLIKLVTAGGGQILSRKPKPDSDVTQTINTVAYHARPDSDQRFCTQYIIYEDLCNYHPERVRQGKVWKAPSSWFIDCVMSFELLPLDS.

The tract at residues 1-32 (MPDNRQPRNRQPRIRSGNEPRSAPAMEPDGRG) is disordered. An interaction with BRCA1 region spans residues 26-119 (MEPDGRGAWA…KLRNLLHDNE (94 aa)). The segment at 50-87 (CSRCTNILREPVCLGGCEHIFCSNCVSDCIGTGCPVCY) adopts an RING-type zinc-finger fold. Glycyl lysine isopeptide (Lys-Gly) (interchain with G-Cter in SUMO2) cross-links involve residues Lys-160 and Lys-170. Residues 167-211 (PAIKKDASAQQDSYEFVSPSPPADVSERAKKASARSGKKQKKKTL) are disordered. A Phosphoserine modification is found at Ser-186. The segment covering 197 to 209 (KASARSGKKQKKK) has biased composition (basic residues). Residue Thr-299 is modified to Phosphothreonine. A disordered region spans residues 356-404 (NIPLPECSSPPSCKRKVGGTSGRKNSNMSDEFISLSPGTPPSTLSSSSY). Residues 389–404 (SLSPGTPPSTLSSSSY) are compositionally biased toward low complexity. A Phosphoserine modification is found at Ser-391. Thr-394 carries the post-translational modification Phosphothreonine. Lys-423 participates in a covalent cross-link: Glycyl lysine isopeptide (Lys-Gly) (interchain with G-Cter in SUMO2). ANK repeat units lie at residues 427–459 (RGET…VKDH), 460–492 (AGWT…TTGY), and 493–525 (QNDS…AVNI). One copy of the ANK 4; degenerate repeat lies at 526–546 (FGLRPVDYTDDESMKSLLLLP). Lys-548 is covalently cross-linked (Glycyl lysine isopeptide (Lys-Gly) (interchain with G-Cter in SUMO2)). Residues 554–558 (ASHCS) form a flexible linker region. 2 BRCT domains span residues 560 to 653 (MNTG…KYEI) and 667 to 777 (LLPK…PLDS).

Homo- and heterodimer. Heterodimer (RING-type zinc finger) with BRCA1. Heterodimer (via ANK repeats and BRCT domains) with CSTF1/CSTF-50. Component of the BRCA1-A complex, at least composed of the BRCA1, BARD1, UIMC1/RAP80, ABRAXAS1, BRCC3/BRCC36, BABAM2 and BABAM1/NBA1. Interacts with UBXN1. In terms of processing, processed during apoptosis. The homodimer is more susceptible to proteolytic cleavage than the BARD1/BRCA1 heterodimer.

It is found in the nucleus. It catalyses the reaction S-ubiquitinyl-[E2 ubiquitin-conjugating enzyme]-L-cysteine + [acceptor protein]-L-lysine = [E2 ubiquitin-conjugating enzyme]-L-cysteine + N(6)-ubiquitinyl-[acceptor protein]-L-lysine.. It participates in protein modification; protein ubiquitination. Functionally, E3 ubiquitin-protein ligase. The BRCA1-BARD1 heterodimer specifically mediates the formation of 'Lys-6'-linked polyubiquitin chains and coordinates a diverse range of cellular pathways such as DNA damage repair, ubiquitination and transcriptional regulation to maintain genomic stability. Plays a central role in the control of the cell cycle in response to DNA damage. Acts by mediating ubiquitin E3 ligase activity that is required for its tumor suppressor function. Also forms a heterodimer with CSTF1/CSTF-50 to modulate mRNA processing and RNAP II stability by inhibiting pre-mRNA 3' cleavage. This is BRCA1-associated RING domain protein 1 (BARD1) from Homo sapiens (Human).